Reading from the N-terminus, the 580-residue chain is YTH domain-containing family protein 2 (580 aa).

Residues 1–45 are disordered; the sequence is MSASSLLEQRPKGQGNKVQNGSVHQKDGLNDDDFEPYLSPQARPN. S2 carries the post-translational modification N-acetylserine. Phosphoserine occurs at positions 2, 4, 5, 22, 39, and 196. Residues 2–385 form a localization to mRNA processing bodies (P-bodies) region; the sequence is SASSLLEQRP…QAGSGSTPSE (384 aa). The segment at 247–388 is disordered; it reads AKQQPKLKTK…SGSTPSEPHP (142 aa). Over residues 291–317 the composition is skewed to polar residues; it reads ALVQNIGQQPTQGSPQPVGQQANNSPP. Residues 338 to 350 are compositionally biased toward low complexity; it reads AQLSVQQQAAQPT. A Phosphoserine modification is found at S360. Residues 360–372 show a composition bias toward gly residues; sequence SGFGHNGVDGNGV. Residues 373–384 are compositionally biased toward polar residues; the sequence is GQTQAGSGSTPS. Residues 386–580 form an interaction with m6A-containing mRNAs region; it reads PHPVLEKLRS…VKKERQGRGK (195 aa). The residue at position 395 (S395) is a Phosphoserine. Positions 411–545 constitute a YTH domain; it reads GRVFIIKSYS…EKAKQVLKII (135 aa). RNA-binding positions include 417-419, D423, 433-434, N463, W487, and W492; these read KSY and WC.

Belongs to the YTHDF family. YTHDF2 subfamily. Interacts with CNOT1; interaction is direct and promotes recruitment of the CCR4-NOT complex. Interacts with YTHDF3. Interacts with RIDA/HRSP12; interaction leads to recruitment of the ribonuclease P/MRP complex. In terms of processing, ubiquitinated by the SCF(SKP2) complex, leading to its degradation.

It localises to the cytoplasm. It is found in the cytosol. The protein resides in the P-body. The protein localises to the stress granule. Its subcellular location is the nucleus. Specifically recognizes and binds N6-methyladenosine (m6A)-containing RNAs, and regulates their stability. M6A is a modification present at internal sites of mRNAs and some non-coding RNAs and plays a role in mRNA stability and processing. Acts as a regulator of mRNA stability by promoting degradation of m6A-containing mRNAs via interaction with the CCR4-NOT and ribonuclease P/MRP complexes, depending on the context. The YTHDF paralogs (YTHDF1, YTHDF2 and YTHDF3) share m6A-containing mRNAs targets and act redundantly to mediate mRNA degradation and cellular differentiation. M6A-containing mRNAs containing a binding site for RIDA/HRSP12 (5'-GGUUC-3') are preferentially degraded by endoribonucleolytic cleavage: cooperative binding of RIDA/HRSP12 and YTHDF2 to transcripts leads to recruitment of the ribonuclease P/MRP complex. Other m6A-containing mRNAs undergo deadenylation via direct interaction between YTHDF2 and CNOT1, leading to recruitment of the CCR4-NOT and subsequent deadenylation of m6A-containing mRNAs. Required maternally to regulate oocyte maturation: probably acts by binding to m6A-containing mRNAs, thereby regulating maternal transcript dosage during oocyte maturation, which is essential for the competence of oocytes to sustain early zygotic development. Also required during spermatogenesis: regulates spermagonial adhesion by promoting degradation of m6A-containing transcripts coding for matrix metallopeptidases. Also involved in hematopoietic stem cells specification by binding to m6A-containing mRNAs, leading to promote their degradation. Also acts as a regulator of neural development by promoting m6A-dependent degradation of neural development-related mRNA targets. Inhibits neural specification of induced pluripotent stem cells by binding to methylated neural-specific mRNAs and promoting their degradation, thereby restraining neural differentiation. Regulates circadian regulation of hepatic lipid metabolism: acts by promoting m6A-dependent degradation of PPARA transcripts. Regulates the innate immune response to infection by inhibiting the type I interferon response: acts by binding to m6A-containing IFNB transcripts and promoting their degradation. May also act as a promoter of cap-independent mRNA translation following heat shock stress: upon stress, relocalizes to the nucleus and specifically binds mRNAs with some m6A methylation mark at their 5'-UTR, protecting demethylation of mRNAs by FTO, thereby promoting cap-independent mRNA translation. Regulates mitotic entry by promoting the phase-specific m6A-dependent degradation of WEE1 transcripts. Promotes formation of phase-separated membraneless compartments, such as P-bodies or stress granules, by undergoing liquid-liquid phase separation upon binding to mRNAs containing multiple m6A-modified residues: polymethylated mRNAs act as a multivalent scaffold for the binding of YTHDF proteins, juxtaposing their disordered regions and thereby leading to phase separation. The resulting mRNA-YTHDF complexes then partition into different endogenous phase-separated membraneless compartments, such as P-bodies, stress granules or neuronal RNA granules. May also recognize and bind RNAs modified by C5-methylcytosine (m5C) and act as a regulator of rRNA processing. This chain is YTH domain-containing family protein 2, found in Bos taurus (Bovine).